Consider the following 1692-residue polypeptide: Cullin-7 (1692 aa).

A CPH domain is found at 348–421 (RTAFASVNTY…HWHMLEILGF (74 aa)). Residues 791–970 (PIQIPFFDVF…HTRLFYMVRA (180 aa)) form the DOC domain. Residues 1319 to 1335 (VAHEDSGKEHKSKKEDA) are compositionally biased toward basic and acidic residues. Positions 1319-1374 (VAHEDSGKEHKSKKEDAAGETAAVAMADEEEEEGKKEEGEEEEGEGEEELEEEEER) are disordered. Residues 1357–1374 (GEEEEGEGEEELEEEEER) are compositionally biased toward acidic residues. K1570 participates in a covalent cross-link: Glycyl lysine isopeptide (Lys-Gly) (interchain with G-Cter in NEDD8).

Belongs to the cullin family. Component of the 3M complex, composed of core components CUL7, CCDC8 and OBSL1. Component of the Cul7-RING(FBXW8) complex consisting of CUL7, RBX1, SKP1 and FBXW8. Within the Cul7-RING(FBXW8) complex interacts with FBXW8 and RBX1, but not with SKP1. Interacts with CUL1 (via the C-terminal domain); the interaction seems to be mediated by FBXW8; it is likely specific to FBXW8, but not other F-box proteins. Interacts (via the CPH domain) with p53/TP53; the interaction preferentially involves tetrameric and dimeric p53/TP53; this interaction recruits p53/TP53 for ubiquitination by neddylated CUL1-RBX1. The CUL7-CUL9 heterodimer seems to interact specifically with p53/TP53. Interacts with FBXW8; interaction is mutually exclusive of binding to CUL9 or p53/TP53. Interacts with CUL9; leading to inhibited CUL9 activity. Interacts with OBSL1. Interacts (as part of the 3M complex) with HDAC4 and HDAC5; it is negatively regulated by ANKRA2.

Its subcellular location is the cytoplasm. It is found in the cytoskeleton. It localises to the microtubule organizing center. The protein resides in the centrosome. The protein localises to the perinuclear region. Its subcellular location is the golgi apparatus. The protein operates within protein modification; protein ubiquitination. Core component of the 3M and Cul7-RING(FBXW8) complexes, which mediate the ubiquitination and subsequent proteasomal degradation of target proteins. Core component of the 3M complex, a complex required to regulate microtubule dynamics and genome integrity. It is unclear how the 3M complex regulates microtubules, it could act by controlling the level of a microtubule stabilizer. The Cul7-RING(FBXW8) complex alone lacks ubiquitination activity and does not promote polyubiquitination and proteasomal degradation of p53/TP53. However it mediates recruitment of p53/TP53 for ubiquitination by neddylated CUL1-RBX1. Interaction with CUL9 is required to inhibit CUL9 activity and ubiquitination of BIRC5. The Cul7-RING(FBXW8) complex also mediates ubiquitination and consequent degradation of target proteins such as GORASP1, IRS1 and MAP4K1/HPK1. Ubiquitination of GORASP1 regulates Golgi morphogenesis and dendrite patterning in brain. Mediates ubiquitination and degradation of IRS1 in a mTOR-dependent manner: the Cul7-RING(FBXW8) complex recognizes and binds IRS1 previously phosphorylated by S6 kinase (RPS6KB1 or RPS6KB2). The Cul7-RING(FBXW8) complex also mediates ubiquitination of MAP4K1/HPK1: recognizes and binds autophosphorylated MAP4K1/HPK1, leading to its degradation, thereby affecting cell proliferation and differentiation. Acts as a regulator in trophoblast cell epithelial-mesenchymal transition and placental development. While the Cul7-RING(FBXW8) and the 3M complexes are associated and involved in common processes, CUL7 and the Cul7-RING(FBXW8) complex may have additional functions. Probably plays a role in the degradation of proteins involved in endothelial proliferation and/or differentiation. The protein is Cullin-7 (Cul7) of Rattus norvegicus (Rat).